The chain runs to 449 residues: Elongation factor 1-alpha (449 aa).

The tr-type G domain occupies 5-234; it reads KQHVSIVVIG…DNCDPPKRPV (230 aa). A G1 region spans residues 14–21; that stretch reads GHVDSGKS. Position 14-21 (14-21) interacts with GTP; the sequence is GHVDSGKS. K55 carries the N6,N6-dimethyllysine modification. Residues 70–74 are G2; the sequence is GITID. The residue at position 79 (K79) is an N6,N6,N6-trimethyllysine. Positions 91–94 are G3; the sequence is DAPG. Residues 91–95 and 153–156 each bind GTP; these read DAPGH and NKMD. The tract at residues 153–156 is G4; sequence NKMD. K187 is subject to N6,N6,N6-trimethyllysine. The interval 194–196 is G5; that stretch reads SGW. Position 265 is an N6-methyllysine (K265). Residues K310 and K400 each carry the N6,N6,N6-trimethyllysine modification.

This sequence belongs to the TRAFAC class translation factor GTPase superfamily. Classic translation factor GTPase family. EF-Tu/EF-1A subfamily.

The protein localises to the cytoplasm. In terms of biological role, this protein promotes the GTP-dependent binding of aminoacyl-tRNA to the A-site of ribosomes during protein biosynthesis. The protein is Elongation factor 1-alpha of Pyropia yezoensis (Susabi-nori).